Consider the following 875-residue polypeptide: Alanine--tRNA ligase (875 aa).

Residues histidine 596, histidine 600, cysteine 700, and histidine 704 each coordinate Zn(2+).

The protein belongs to the class-II aminoacyl-tRNA synthetase family. Zn(2+) is required as a cofactor.

The protein resides in the cytoplasm. It carries out the reaction tRNA(Ala) + L-alanine + ATP = L-alanyl-tRNA(Ala) + AMP + diphosphate. Catalyzes the attachment of alanine to tRNA(Ala) in a two-step reaction: alanine is first activated by ATP to form Ala-AMP and then transferred to the acceptor end of tRNA(Ala). Also edits incorrectly charged Ser-tRNA(Ala) and Gly-tRNA(Ala) via its editing domain. The protein is Alanine--tRNA ligase of Methanocella arvoryzae (strain DSM 22066 / NBRC 105507 / MRE50).